We begin with the raw amino-acid sequence, 641 residues long: Threonine--tRNA ligase (641 aa).

The TGS domain occupies 1–61; the sequence is MPAITLPDGS…ADDASVRFIT (61 aa). Residues 243 to 536 form a catalytic region; it reads DHRRIGREMD…LIEQHAGRFP (294 aa). C336, H387, and H513 together coordinate Zn(2+).

The protein belongs to the class-II aminoacyl-tRNA synthetase family. As to quaternary structure, homodimer. Requires Zn(2+) as cofactor.

It localises to the cytoplasm. The enzyme catalyses tRNA(Thr) + L-threonine + ATP = L-threonyl-tRNA(Thr) + AMP + diphosphate + H(+). In terms of biological role, catalyzes the attachment of threonine to tRNA(Thr) in a two-step reaction: L-threonine is first activated by ATP to form Thr-AMP and then transferred to the acceptor end of tRNA(Thr). Also edits incorrectly charged L-seryl-tRNA(Thr). The polypeptide is Threonine--tRNA ligase (Gluconacetobacter diazotrophicus (strain ATCC 49037 / DSM 5601 / CCUG 37298 / CIP 103539 / LMG 7603 / PAl5)).